A 502-amino-acid chain; its full sequence is tRNA (adenine(58)-N(1))-methyltransferase catalytic subunit trm61 (502 aa).

A disordered region spans residues 76-112; the sequence is TGSRGRKNQSSKKRKADDLDTPTSNKDEAQSSPGTPR. Basic residues predominate over residues 79-89; sequence RGRKNQSSKKR. Residues 167 to 169, Glu201, Arg206, 229 to 230, and Asp254 contribute to the S-adenosyl-L-methionine site; these read SGS and DV. 2 disordered regions span residues 365–417 and 444–502; these read LLQE…DLGR and EEDE…ETQS. The span at 385–394 shows a compositional bias: basic and acidic residues; that stretch reads GKTEVEEKSL. Residues 403 to 412 show a composition bias toward low complexity; sequence TTAAPSSTPS. The span at 475 to 494 shows a compositional bias: basic and acidic residues; it reads KREAKEKEVQEEAQKSEDVP.

This sequence belongs to the class I-like SAM-binding methyltransferase superfamily. TRM61 family. As to quaternary structure, heterotetramer; composed of two copies of TRM6 and two copies of TRM61.

The protein localises to the nucleus. The catalysed reaction is adenosine(58) in tRNA + S-adenosyl-L-methionine = N(1)-methyladenosine(58) in tRNA + S-adenosyl-L-homocysteine + H(+). Catalytic subunit of tRNA (adenine-N(1)-)-methyltransferase, which catalyzes the formation of N(1)-methyladenine at position 58 (m1A58) in initiator methionyl-tRNA. The polypeptide is tRNA (adenine(58)-N(1))-methyltransferase catalytic subunit trm61 (trm61) (Aspergillus fumigatus (strain ATCC MYA-4609 / CBS 101355 / FGSC A1100 / Af293) (Neosartorya fumigata)).